The following is a 178-amino-acid chain: Inner membrane-spanning protein YciB (178 aa).

5 consecutive transmembrane segments (helical) span residues 12–32, 50–70, 74–94, 120–140, and 145–165; these read LFFAAYSLTGNIYLATGVAIV, PMQWVSLALILVLGGLTLVLH, FIMWKPTVLYWLLGAGFLISD, LTFAWSGFFAFMGALNLFVAF, and AVWVNFKLFGGMGLMLVFVLA.

The protein belongs to the YciB family.

Its subcellular location is the cell inner membrane. Its function is as follows. Plays a role in cell envelope biogenesis, maintenance of cell envelope integrity and membrane homeostasis. This chain is Inner membrane-spanning protein YciB, found in Laribacter hongkongensis (strain HLHK9).